A 1090-amino-acid polypeptide reads, in one-letter code: UPF0507 protein C1Q_01007 (1090 aa).

The VPS9 domain maps to 289–436 (FSVNQLLTDF…FEDFNKNTGN (148 aa)).

This sequence belongs to the UPF0507 family.

The chain is UPF0507 protein C1Q_01007 from Saccharomyces cerevisiae (strain JAY291) (Baker's yeast).